The sequence spans 260 residues: MTTGLLQGKKGLITGIANNMSISWAIAQLAKKHGAELWFTYQSEVLEKRVKPLAEEIGCNFVSELDVTNPKSISNLFDDIKEKWGSFDFLLHGMAFADKNELKGRYVDTSLENFHNSLHISCYSLLELSRSAEALMHDGGSIVTLTYYGAEKVIPNYNVMGISKAALEASVKYLATDLGENNIRVNAISAGPIKTLASSAIGDFSTMLKSHAATAPLKRNTTQEDVGGAAVYLFSNLSKGVTGEIHYVDCGYNIMGSNKL.

Residues Gly-15, 21–22 (SI), Gln-42, 66–67 (DV), and Met-94 each bind NAD(+). Ala-97 provides a ligand contact to substrate. Active-site proton acceptor residues include Tyr-147 and Tyr-157. NAD(+) is bound by residues Lys-164 and 193–197 (IKTLA).

This sequence belongs to the short-chain dehydrogenases/reductases (SDR) family. FabI subfamily. As to quaternary structure, homotetramer.

The catalysed reaction is a 2,3-saturated acyl-[ACP] + NAD(+) = a (2E)-enoyl-[ACP] + NADH + H(+). It functions in the pathway lipid metabolism; fatty acid biosynthesis. Functionally, catalyzes the reduction of a carbon-carbon double bond in an enoyl moiety that is covalently linked to an acyl carrier protein (ACP). Involved in the elongation cycle of fatty acid which are used in the lipid metabolism. In Rickettsia felis (strain ATCC VR-1525 / URRWXCal2) (Rickettsia azadi), this protein is Enoyl-[acyl-carrier-protein] reductase [NADH] FabI (fabI).